Here is a 393-residue protein sequence, read N- to C-terminus: Cytochrome b (393 aa).

A run of 4 helical transmembrane segments spans residues 33 to 53, 77 to 98, 113 to 133, and 178 to 198; these read FGSL…FLAM, WFLR…YLHM, WNIG…GYVL, and FFAI…LHLL. 2 residues coordinate heme b: His83 and His97. Residues His182 and His196 each coordinate heme b. His201 is an a ubiquinone binding site. Helical transmembrane passes span 226–246, 288–308, 320–340, and 347–367; these read YKDV…ALFA, LGGV…PFIH, LSQL…WIGG, and FIII…ILMP.

Belongs to the cytochrome b family. The cytochrome bc1 complex contains 3 respiratory subunits (MT-CYB, CYC1 and UQCRFS1), 2 core proteins (UQCRC1 and UQCRC2) and probably 6 low-molecular weight proteins. It depends on heme b as a cofactor.

Its subcellular location is the mitochondrion inner membrane. In terms of biological role, component of the ubiquinol-cytochrome c reductase complex (complex III or cytochrome b-c1 complex) that is part of the mitochondrial respiratory chain. The b-c1 complex mediates electron transfer from ubiquinol to cytochrome c. Contributes to the generation of a proton gradient across the mitochondrial membrane that is then used for ATP synthesis. The protein is Cytochrome b (mt-cyb) of Synbranchus marmoratus (Marbled swamp eel).